We begin with the raw amino-acid sequence, 255 residues long: uncharacterized protein (255 aa).

A signal peptide spans 1–23; sequence MKRLNKLVLGIIFLFLVISITAG. Cysteine 24 carries the N-palmitoyl cysteine lipid modification. Cysteine 24 carries S-diacylglycerol cysteine lipidation.

This sequence belongs to the staphylococcal tandem lipoprotein family.

It localises to the cell membrane. This is an uncharacterized protein from Staphylococcus aureus (strain Mu50 / ATCC 700699).